The primary structure comprises 236 residues: Biosynthetic peptidoglycan transglycosylase (236 aa).

A helical membrane pass occupies residues 17–37 (IVILVALALLALPYLLTILYG).

The protein belongs to the glycosyltransferase 51 family.

It is found in the cell inner membrane. The enzyme catalyses [GlcNAc-(1-&gt;4)-Mur2Ac(oyl-L-Ala-gamma-D-Glu-L-Lys-D-Ala-D-Ala)](n)-di-trans,octa-cis-undecaprenyl diphosphate + beta-D-GlcNAc-(1-&gt;4)-Mur2Ac(oyl-L-Ala-gamma-D-Glu-L-Lys-D-Ala-D-Ala)-di-trans,octa-cis-undecaprenyl diphosphate = [GlcNAc-(1-&gt;4)-Mur2Ac(oyl-L-Ala-gamma-D-Glu-L-Lys-D-Ala-D-Ala)](n+1)-di-trans,octa-cis-undecaprenyl diphosphate + di-trans,octa-cis-undecaprenyl diphosphate + H(+). It participates in cell wall biogenesis; peptidoglycan biosynthesis. Functionally, peptidoglycan polymerase that catalyzes glycan chain elongation from lipid-linked precursors. This Rhodopseudomonas palustris (strain ATCC BAA-98 / CGA009) protein is Biosynthetic peptidoglycan transglycosylase.